The chain runs to 194 residues: MSRQKKSRNIVDVMPQRKSDKSQISPASYARPSKKLTRYELDAKAREDKKKKKHKGLTSGSRHSRSEQHNNQQMQEKRDPRLGSRKKVPLVVEFVNNPEKGQFIQPVQVQPAEEKVKKLDPMLELEQLENNECLNQLLDALDEGKTISAEDQKFVDECLDRIAQLMDELGIEDEEESEDDLLRTFEKIDINQFK.

The tract at residues 1 to 87 (MSRQKKSRNI…RDPRLGSRKK (87 aa)) is disordered. A compositionally biased stretch (basic and acidic residues) spans 37 to 48 (TRYELDAKARED).

Belongs to the YihI family. As to quaternary structure, interacts with Der.

Functionally, a GTPase-activating protein (GAP) that modifies Der/EngA GTPase function. May play a role in ribosome biogenesis. The polypeptide is Der GTPase-activating protein YihI (Mannheimia succiniciproducens (strain KCTC 0769BP / MBEL55E)).